A 1124-amino-acid chain; its full sequence is Phytochrome type A (1124 aa).

Low complexity predominate over residues 1-19; sequence MSTTRPSQSSNNSGRSRNS. Residues 1-21 are disordered; the sequence is MSTTRPSQSSNNSGRSRNSAR. The 184-residue stretch at 218-401 folds into the GAF domain; that stretch reads SMERLCDTMV…VFAIHVNKEI (184 aa). A phytochromobilin-binding site is contributed by cysteine 323. PAS domains lie at 617–687 and 750–821; these read VTSE…LQGE and DYKA…VNFG. In terms of domain architecture, Histidine kinase spans 901 to 1120; it reads YMKRQIRNPL…ILSVELAAAH (220 aa).

The protein belongs to the phytochrome family. In terms of assembly, homodimer. In terms of processing, contains one covalently linked phytochromobilin chromophore.

Functionally, regulatory photoreceptor which exists in two forms that are reversibly interconvertible by light: the Pr form that absorbs maximally in the red region of the spectrum and the Pfr form that absorbs maximally in the far-red region. Photoconversion of Pr to Pfr induces an array of morphogenic responses, whereas reconversion of Pfr to Pr cancels the induction of those responses. Pfr controls the expression of a number of nuclear genes including those encoding the small subunit of ribulose-bisphosphate carboxylase, chlorophyll A/B binding protein, protochlorophyllide reductase, rRNA, etc. It also controls the expression of its own gene(s) in a negative feedback fashion. This Lathyrus sativus (White vetchling) protein is Phytochrome type A (PHYA).